The chain runs to 381 residues: Secretion apparatus protein BsaZ (381 aa).

Transmembrane regions (helical) follow at residues 28–48 (IVAL…VDLT), 80–100 (IAAP…LVQS), 134–154 (AVKA…FADL), and 175–195 (IVLT…VLIV). The tract at residues 343–381 (NRGGPPREMPPEATHAPDAHGGDAASGGATSAQAGERNA) is disordered. Residues 364 to 381 (GDAASGGATSAQAGERNA) are compositionally biased toward low complexity.

It belongs to the type III secretion exporter family.

It is found in the cell membrane. Part of the bsa type III secretion system, is involved in the intracellular replication of invading bacteria inside the host cell. Probably necessary for the lysis of the vacuole membrane and escape into the host cell cytoplasm. The protein is Secretion apparatus protein BsaZ (bsaZ) of Burkholderia thailandensis (strain ATCC 700388 / DSM 13276 / CCUG 48851 / CIP 106301 / E264).